Reading from the N-terminus, the 101-residue chain is MTLSAYLALALILFCIGLYGALTKRNTVIVLICIELMLNAVNINFVAFAKYGAHPSVHGHVFALFAIAVAAAEAAVGLAALIAFYRSRKTVQVDEANSLKH.

Transmembrane regions (helical) follow at residues Thr2–Leu22, Val28–Phe48, and Phe62–Ile82.

It belongs to the complex I subunit 4L family. NDH-1 is composed of 14 different subunits. Subunits NuoA, H, J, K, L, M, N constitute the membrane sector of the complex.

The protein resides in the cell membrane. The catalysed reaction is a quinone + NADH + 5 H(+)(in) = a quinol + NAD(+) + 4 H(+)(out). Its function is as follows. NDH-1 shuttles electrons from NADH, via FMN and iron-sulfur (Fe-S) centers, to quinones in the respiratory chain. The immediate electron acceptor for the enzyme in this species is believed to be a menaquinone. Couples the redox reaction to proton translocation (for every two electrons transferred, four hydrogen ions are translocated across the cytoplasmic membrane), and thus conserves the redox energy in a proton gradient. The sequence is that of NADH-quinone oxidoreductase subunit K from Geobacillus kaustophilus (strain HTA426).